The chain runs to 100 residues: Urease subunit gamma (100 aa).

It belongs to the urease gamma subunit family. Heterotrimer of UreA (gamma), UreB (beta) and UreC (alpha) subunits. Three heterotrimers associate to form the active enzyme.

The protein resides in the cytoplasm. The catalysed reaction is urea + 2 H2O + H(+) = hydrogencarbonate + 2 NH4(+). It functions in the pathway nitrogen metabolism; urea degradation; CO(2) and NH(3) from urea (urease route): step 1/1. The chain is Urease subunit gamma from Paraburkholderia xenovorans (strain LB400).